We begin with the raw amino-acid sequence, 427 residues long: Imidazolonepropionase (427 aa).

Fe(3+)-binding residues include His81 and His83. Zn(2+) contacts are provided by His81 and His83. Arg90, Tyr153, and His186 together coordinate 4-imidazolone-5-propanoate. Residue Tyr153 participates in N-formimidoyl-L-glutamate binding. Fe(3+) is bound at residue His260. A Zn(2+)-binding site is contributed by His260. Glu263 contributes to the 4-imidazolone-5-propanoate binding site. Asp335 serves as a coordination point for Fe(3+). Asp335 contributes to the Zn(2+) binding site. 2 residues coordinate N-formimidoyl-L-glutamate: Asn337 and Gly339. A 4-imidazolone-5-propanoate-binding site is contributed by Ser340.

This sequence belongs to the metallo-dependent hydrolases superfamily. HutI family. The cofactor is Zn(2+). Fe(3+) is required as a cofactor.

The protein localises to the cytoplasm. It catalyses the reaction 4-imidazolone-5-propanoate + H2O = N-formimidoyl-L-glutamate. The protein operates within amino-acid degradation; L-histidine degradation into L-glutamate; N-formimidoyl-L-glutamate from L-histidine: step 3/3. Catalyzes the hydrolytic cleavage of the carbon-nitrogen bond in imidazolone-5-propanoate to yield N-formimidoyl-L-glutamate. It is the third step in the universal histidine degradation pathway. This chain is Imidazolonepropionase, found in Chloroflexus aggregans (strain MD-66 / DSM 9485).